The sequence spans 381 residues: Probable peptidoglycan glycosyltransferase FtsW (381 aa).

Over 1–15 (MNNKKKIVKIFFYDK) the chain is Cytoplasmic. A helical membrane pass occupies residues 16–36 (ILFFLLISLSIIGIIIVSSAS). Topologically, residues 37-53 (ISFGIRLHNDYFYFAKR) are periplasmic. The chain crosses the membrane as a helical span at residues 54-74 (NLLYFFLSFFLFFQIIRIPIN). The Cytoplasmic segment spans residues 75–81 (QLEKYNK). The chain crosses the membrane as a helical span at residues 82 to 102 (IALLINLFLLIIVFIIGNSIN). Residues 103–109 (GAIRWIK) are Periplasmic-facing. A helical transmembrane segment spans residues 110-130 (IGFFSIQPSECSKLILFFYIS). Topologically, residues 131 to 143 (DYIVKKNKELKNK) are cytoplasmic. A helical transmembrane segment spans residues 144 to 164 (LWGFLKPIIIMLIFVILLLMQ). Residues 165 to 166 (PD) lie on the Periplasmic side of the membrane. Helical transmembrane passes span 167–187 (LGNS…AGIN) and 188–208 (LWKC…LIIF). The Periplasmic segment spans residues 209 to 278 (KPYRIRRILS…FSILGEELGY (70 aa)). The helical transmembrane segment at 279–299 (IGSIIILIMLFFVIFRIFLIG) threads the bilayer. Residues 300–317 (KNSFIQKKFFSGYFSFSV) are Cytoplasmic-facing. A helical transmembrane segment spans residues 318-338 (GIWISLQTIMNVGGVIGILPI). Residues 339 to 343 (KGLTL) lie on the Periplasmic side of the membrane. The chain crosses the membrane as a helical span at residues 344 to 364 (PFISYGGSSLITIFSAIAIVI). Residues 365-381 (RSDFELRINKYQAYLKQ) are Cytoplasmic-facing.

The protein belongs to the SEDS family. FtsW subfamily.

The protein resides in the cell inner membrane. It catalyses the reaction [GlcNAc-(1-&gt;4)-Mur2Ac(oyl-L-Ala-gamma-D-Glu-L-Lys-D-Ala-D-Ala)](n)-di-trans,octa-cis-undecaprenyl diphosphate + beta-D-GlcNAc-(1-&gt;4)-Mur2Ac(oyl-L-Ala-gamma-D-Glu-L-Lys-D-Ala-D-Ala)-di-trans,octa-cis-undecaprenyl diphosphate = [GlcNAc-(1-&gt;4)-Mur2Ac(oyl-L-Ala-gamma-D-Glu-L-Lys-D-Ala-D-Ala)](n+1)-di-trans,octa-cis-undecaprenyl diphosphate + di-trans,octa-cis-undecaprenyl diphosphate + H(+). It participates in cell wall biogenesis; peptidoglycan biosynthesis. Its function is as follows. Peptidoglycan polymerase that is essential for cell division. This Wigglesworthia glossinidia brevipalpis protein is Probable peptidoglycan glycosyltransferase FtsW.